A 331-amino-acid polypeptide reads, in one-letter code: DNA-directed RNA polymerase subunit alpha (331 aa).

The tract at residues 1–237 (MQSSVTEFLI…NQLESFVYLR (237 aa)) is alpha N-terminal domain (alpha-NTD). The interval 251 to 331 (FDPILLRPVD…NWPPDNILDN (81 aa)) is alpha C-terminal domain (alpha-CTD).

The protein belongs to the RNA polymerase alpha chain family. In terms of assembly, homodimer. The RNAP catalytic core consists of 2 alpha, 1 beta, 1 beta' and 1 omega subunit. When a sigma factor is associated with the core the holoenzyme is formed, which can initiate transcription.

It carries out the reaction RNA(n) + a ribonucleoside 5'-triphosphate = RNA(n+1) + diphosphate. In terms of biological role, DNA-dependent RNA polymerase catalyzes the transcription of DNA into RNA using the four ribonucleoside triphosphates as substrates. The protein is DNA-directed RNA polymerase subunit alpha of Buchnera aphidicola subsp. Baizongia pistaciae (strain Bp).